The primary structure comprises 274 residues: WIMGHMVNAIEQVDEFLNLGANAIEFDIDFDKDGIAQITHHGIPCDCGRKCTKKAIFTEYLDNIRQVTTPDDPKFREQLVLLALDLKLQRISSAKAYRAGEDVAKKLLDHYWQRGNSKARAYILLNIPLVEDYEFIRAFKDTLKNEGYESYNDKVGINFTGNEDLDKIRDVLEILGIHKQVWRADGITSCFARGTERLKEALKKRDTPGYNYINKVYAWTLVRKSIMRRSLRLGVDGVMSNNPDRVIKVLKEKEFADKFRLATYNDNPWEKFRG.

Histidine 5 is a catalytic residue. The Mg(2+) site is built by glutamate 25 and aspartate 27. Histidine 41 (nucleophile) is an active-site residue. 2 disulfide bridges follow: cysteine 45/cysteine 51 and cysteine 47/cysteine 190. Aspartate 85 serves as a coordination point for Mg(2+).

It belongs to the arthropod phospholipase D family. Class II subfamily. Mg(2+) is required as a cofactor. In terms of tissue distribution, expressed by the venom gland.

The protein localises to the secreted. The catalysed reaction is an N-(acyl)-sphingosylphosphocholine = an N-(acyl)-sphingosyl-1,3-cyclic phosphate + choline. It catalyses the reaction an N-(acyl)-sphingosylphosphoethanolamine = an N-(acyl)-sphingosyl-1,3-cyclic phosphate + ethanolamine. The enzyme catalyses a 1-acyl-sn-glycero-3-phosphocholine = a 1-acyl-sn-glycero-2,3-cyclic phosphate + choline. It carries out the reaction a 1-acyl-sn-glycero-3-phosphoethanolamine = a 1-acyl-sn-glycero-2,3-cyclic phosphate + ethanolamine. In terms of biological role, dermonecrotic toxins cleave the phosphodiester linkage between the phosphate and headgroup of certain phospholipids (sphingolipid and lysolipid substrates), forming an alcohol (often choline) and a cyclic phosphate. This toxin acts on sphingomyelin (SM). It may also act on ceramide phosphoethanolamine (CPE), lysophosphatidylcholine (LPC) and lysophosphatidylethanolamine (LPE), but not on lysophosphatidylserine (LPS), and lysophosphatidylglycerol (LPG). It acts by transphosphatidylation, releasing exclusively cyclic phosphate products as second products. Induces dermonecrosis, hemolysis, increased vascular permeability, edema, inflammatory response, and platelet aggregation. This is Dermonecrotic toxin SdSicTox-betaIIB1ai from Sicarius cf. damarensis (strain GJB-2008) (Six-eyed sand spider).